The sequence spans 254 residues: MAVTDVFARRATLRRSLRLLADFRYEQRDPARFYRTLAADTAAMIGDLWLATHSEPPVGRTLLDVGGGPGYFATAFSDAGVGYIGVEPDPDEMHAAGPAFTGRPGMFVRASGMALPLADDSVDICLSSNVAEHVPRPWQLGTEMLRVTKPGGLVVLSYTVWLGPFGGHEMGLSHYLGGARAAARYVRKHGHPAKNNYGSSLFAVSAAEGLRWAAGTGAALAVFPRYHPRWAWWLTSVPVLREFLVSNLVLVLTP.

Belongs to the methyltransferase superfamily.

This is an uncharacterized protein from Mycobacterium bovis (strain ATCC BAA-935 / AF2122/97).